Reading from the N-terminus, the 453-residue chain is Tol-Pal system protein TolB (453 aa).

An N-terminal signal peptide occupies residues 1–34; the sequence is MYLIIKKTHKLPHWLQKVSLSIMLIIFLWKPALL.

Belongs to the TolB family. As to quaternary structure, the Tol-Pal system is composed of five core proteins: the inner membrane proteins TolA, TolQ and TolR, the periplasmic protein TolB and the outer membrane protein Pal. They form a network linking the inner and outer membranes and the peptidoglycan layer.

The protein resides in the periplasm. Its function is as follows. Part of the Tol-Pal system, which plays a role in outer membrane invagination during cell division and is important for maintaining outer membrane integrity. TolB occupies a key intermediary position in the Tol-Pal system because it communicates directly with both membrane-embedded components, Pal in the outer membrane and TolA in the inner membrane. The chain is Tol-Pal system protein TolB from Blochmanniella pennsylvanica (strain BPEN).